A 386-amino-acid chain; its full sequence is Lysophosphatidylserine lipase ABHD12 (386 aa).

Residues 1 to 66 (MRKRAEPVPP…YGLWSRLRMF (66 aa)) lie on the Cytoplasmic side of the membrane. The helical transmembrane segment at 67–87 (LIFLLGLYIAIPFLVKICPAI) threads the bilayer. Over 88-386 (QTQLVFLNLV…RDFLGNTEQQ (299 aa)) the chain is Extracellular. Asn-114 carries N-linked (GlcNAc...) asparagine glycosylation. Ser-237 acts as the Nucleophile in catalysis. Active-site charge relay system residues include Asp-324 and His-363.

This sequence belongs to the serine esterase family.

It is found in the endoplasmic reticulum membrane. It catalyses the reaction 1-(9Z-octadecenoyl)-sn-glycero-3-phospho-L-serine + H2O = sn-glycero-3-phospho-L-serine + (9Z)-octadecenoate + H(+). The catalysed reaction is 1-(9Z-octadecenoyl)-sn-glycero-3-phospho-(1'-sn-glycerol) + H2O = sn-glycero-3-phospho-(1'-sn-glycerol) + (9Z)-octadecenoate + H(+). It carries out the reaction 1-(9Z-octadecenoyl)-sn-glycero-3-phospho-(1D-myo-inositol) + H2O = sn-glycero-3-phospho-1D-myo-inositol + (9Z)-octadecenoate + H(+). The enzyme catalyses 1-(9Z-octadecenoyl)-sn-glycero-3-phosphoethanolamine + H2O = sn-glycero-3-phosphoethanolamine + (9Z)-octadecenoate + H(+). It catalyses the reaction 1-(9Z-octadecenoyl)-sn-glycero-3-phosphocholine + H2O = 1-(9Z-octadecenoyl)-sn-glycerol + phosphocholine + H(+). The catalysed reaction is 2-(9Z-octadecenoyl)-glycerol + H2O = glycerol + (9Z)-octadecenoate + H(+). It carries out the reaction 1-hexadecanoyl-sn-glycero-3-phospho-L-serine + H2O = sn-glycero-3-phospho-L-serine + hexadecanoate + H(+). The enzyme catalyses 2-(5Z,8Z,11Z,14Z-eicosatetraenoyl)-glycerol + H2O = glycerol + (5Z,8Z,11Z,14Z)-eicosatetraenoate + H(+). It catalyses the reaction Hydrolyzes glycerol monoesters of long-chain fatty acids.. The catalysed reaction is 1-decanoylglycerol + H2O = decanoate + glycerol + H(+). It carries out the reaction 1-dodecanoylglycerol + H2O = dodecanoate + glycerol + H(+). The enzyme catalyses 1-tetradecanoylglycerol + H2O = tetradecanoate + glycerol + H(+). It catalyses the reaction 2-hexadecanoylglycerol + H2O = glycerol + hexadecanoate + H(+). The catalysed reaction is 1-(9Z-octadecenoyl)-glycerol + H2O = glycerol + (9Z)-octadecenoate + H(+). It carries out the reaction 2-(9Z,12Z-octadecadienoyl)-glycerol + H2O = (9Z,12Z)-octadecadienoate + glycerol + H(+). The enzyme catalyses 1-(5Z,8Z,11Z,14Z-eicosatetraenoyl)-glycerol + H2O = glycerol + (5Z,8Z,11Z,14Z)-eicosatetraenoate + H(+). It catalyses the reaction 1-(9Z,12Z-octadecadienoyl)-glycerol + H2O = (9Z,12Z)-octadecadienoate + glycerol + H(+). The catalysed reaction is 1-hexadecanoylglycerol + H2O = glycerol + hexadecanoate + H(+). It carries out the reaction 1-octadecanoylglycerol + H2O = octadecanoate + glycerol + H(+). The enzyme catalyses 1-octadecanoyl-2-(9,10-epoxyoctadecanoyl)-sn-glycero-3-phospho-L-serine + H2O = 9,10-epoxyoctadecanoate + 1-octadecanoyl-sn-glycero-3-phosphoserine + H(+). It catalyses the reaction 1-octadecanoyl-2-(10-hydroxyoctadecanoyl)-sn-glycero-3-phospho-L-serine + H2O = 1-octadecanoyl-sn-glycero-3-phosphoserine + 10-hydroxyoctadecanoate + H(+). The catalysed reaction is 1-hexadecanoyl-2-(10-hydroxyoctadecanoyl)-sn-glycero-3-phospho-L-serine + H2O = 10-hydroxyoctadecanoate + 1-hexadecanoyl-sn-glycero-3-phospho-L-serine + H(+). Lysophosphatidylserine (LPS) lipase that mediates the hydrolysis of lysophosphatidylserine, a class of signaling lipids that regulates immunological and neurological processes. Represents a major lysophosphatidylserine lipase in the brain, thereby playing a key role in the central nervous system. Also able to hydrolyze oxidized phosphatidylserine; oxidized phosphatidylserine is produced in response to severe inflammatory stress and constitutes a proapoptotic 'eat me' signal. Also has monoacylglycerol (MAG) lipase activity: hydrolyzes 2-arachidonoylglycerol (2-AG), thereby acting as a regulator of endocannabinoid signaling pathways. Has a strong preference for very-long-chain lipid substrates; substrate specificity is likely due to improved catalysis and not improved substrate binding. The protein is Lysophosphatidylserine lipase ABHD12 of Xenopus tropicalis (Western clawed frog).